Here is a 183-residue protein sequence, read N- to C-terminus: Pyruvoyl-dependent arginine decarboxylase (183 aa).

Ser44 bears the Pyruvic acid (Ser) mark.

Belongs to the PdaD family. Pyruvate serves as cofactor.

It catalyses the reaction L-arginine + H(+) = agmatine + CO2. This is Pyruvoyl-dependent arginine decarboxylase from Nitrosopumilus maritimus (strain SCM1).